The chain runs to 407 residues: MRVYVVGGAVRDRLLGLPVQDHDWVVVGATPDEMLARGFRAVGKDFPVFLHPRTGEEYALARTERKSGRGYTGFTVHASPDVTLEEDLRRRDLTINAMAQDEDGTLIDPYGGRRDLENRVFRHVSEAFAEDPVRVLRVARFAARFEGFSVAGETLALMRTMVDDGEVDHLVAERVWQELARGLMETRPSRMFAVLRECCALARILPEVDRLFGVPQPPQHHPEVDTGIHVMAVVDHAAATAQPLAVRWACLLHDLGKADTPVHVLPHHYGHEAKSADRARAVSERLKAPLECRDLAVLLAREHGILHQARALRPVTIVKLLERTDALRRPERFGLLLEAAACDFHGRPGMAERPYVQAAIWQAALAAVRSVDAGAIARSCTDKASIPQRVHEARVAAVKARHAEEKD.

Residues Gly8 and Arg11 each coordinate ATP. Residues Gly8 and Arg11 each coordinate CTP. Mg(2+)-binding residues include Asp21 and Asp23. ATP contacts are provided by Arg91, Arg137, and Arg140. Residues Arg91, Arg137, and Arg140 each coordinate CTP. In terms of domain architecture, HD spans 226 to 327; sequence TGIHVMAVVD…VKLLERTDAL (102 aa).

This sequence belongs to the tRNA nucleotidyltransferase/poly(A) polymerase family. Bacterial CCA-adding enzyme type 1 subfamily. In terms of assembly, monomer. Can also form homodimers and oligomers. Mg(2+) serves as cofactor. Ni(2+) is required as a cofactor.

It carries out the reaction a tRNA precursor + 2 CTP + ATP = a tRNA with a 3' CCA end + 3 diphosphate. The enzyme catalyses a tRNA with a 3' CCA end + 2 CTP + ATP = a tRNA with a 3' CCACCA end + 3 diphosphate. Its function is as follows. Catalyzes the addition and repair of the essential 3'-terminal CCA sequence in tRNAs without using a nucleic acid template. Adds these three nucleotides in the order of C, C, and A to the tRNA nucleotide-73, using CTP and ATP as substrates and producing inorganic pyrophosphate. tRNA 3'-terminal CCA addition is required both for tRNA processing and repair. Also involved in tRNA surveillance by mediating tandem CCA addition to generate a CCACCA at the 3' terminus of unstable tRNAs. While stable tRNAs receive only 3'-terminal CCA, unstable tRNAs are marked with CCACCA and rapidly degraded. In Aromatoleum aromaticum (strain DSM 19018 / LMG 30748 / EbN1) (Azoarcus sp. (strain EbN1)), this protein is Multifunctional CCA protein.